A 53-amino-acid chain; its full sequence is MPITLDPEKLAIVLQHRFNYKICRNCGARNPPDAEKCRRCRSRNLRPKKFKKK.

It belongs to the eukaryotic ribosomal protein eL40 family.

This is Large ribosomal subunit protein eL40 from Pyrobaculum calidifontis (strain DSM 21063 / JCM 11548 / VA1).